The sequence spans 572 residues: Dihydroxy-acid dehydratase (572 aa).

Position 78 (Asp78) interacts with Mg(2+). Cys119 is a binding site for [2Fe-2S] cluster. Asp120 and Lys121 together coordinate Mg(2+). Lys121 carries the N6-carboxylysine modification. Cys192 lines the [2Fe-2S] cluster pocket. Glu459 provides a ligand contact to Mg(2+). Ser485 (proton acceptor) is an active-site residue.

This sequence belongs to the IlvD/Edd family. As to quaternary structure, homodimer. It depends on [2Fe-2S] cluster as a cofactor. The cofactor is Mg(2+).

It catalyses the reaction (2R)-2,3-dihydroxy-3-methylbutanoate = 3-methyl-2-oxobutanoate + H2O. The catalysed reaction is (2R,3R)-2,3-dihydroxy-3-methylpentanoate = (S)-3-methyl-2-oxopentanoate + H2O. It functions in the pathway amino-acid biosynthesis; L-isoleucine biosynthesis; L-isoleucine from 2-oxobutanoate: step 3/4. Its pathway is amino-acid biosynthesis; L-valine biosynthesis; L-valine from pyruvate: step 3/4. Functions in the biosynthesis of branched-chain amino acids. Catalyzes the dehydration of (2R,3R)-2,3-dihydroxy-3-methylpentanoate (2,3-dihydroxy-3-methylvalerate) into 2-oxo-3-methylpentanoate (2-oxo-3-methylvalerate) and of (2R)-2,3-dihydroxy-3-methylbutanoate (2,3-dihydroxyisovalerate) into 2-oxo-3-methylbutanoate (2-oxoisovalerate), the penultimate precursor to L-isoleucine and L-valine, respectively. The protein is Dihydroxy-acid dehydratase of Helicobacter hepaticus (strain ATCC 51449 / 3B1).